The primary structure comprises 94 residues: PqqA binding protein (94 aa).

It belongs to the PqqD family. Monomer. Interacts with PqqE.

Its pathway is cofactor biosynthesis; pyrroloquinoline quinone biosynthesis. Functionally, functions as a PqqA binding protein and presents PqqA to PqqE, in the pyrroloquinoline quinone (PQQ) biosynthetic pathway. This Acinetobacter baumannii (strain AB307-0294) protein is PqqA binding protein.